We begin with the raw amino-acid sequence, 191 residues long: Protein RER1 homolog (191 aa).

3 helical membrane-spanning segments follow: residues 35–55 (AFRW…IILL), 57–77 (GFYI…LLFL), and 135–155 (FFDV…LTFL).

This sequence belongs to the RER1 family.

It localises to the membrane. In terms of biological role, may be involved in protein transport along the secretory pathway. The sequence is that of Protein RER1 homolog (rer-1) from Caenorhabditis elegans.